Here is a 21-residue protein sequence, read N- to C-terminus: Peptide PGLa-R4 (21 aa).

Residue L21 is modified to Leucine amide.

As to expression, expressed by the skin glands.

It localises to the secreted. Antimicrobial peptide. The chain is Peptide PGLa-R4 from Xenopus ruwenzoriensis (Uganda clawed frog).